We begin with the raw amino-acid sequence, 264 residues long: MTSLFTAAILGIVEGLTEFLPVSSTGHLIITGHLLGFTGEKAASFEVAIQLGAILAVVVLYWSRFWGLLFPKPGQQFSGIRGLYLLFLTSLPASVLGLLAHDFIKQHLFNPYTVAWALGVGAIMILIVEKKETTPSCFTLDEVTPKLALGIGCFQCLALWPGFSRSAATIMGGMLLGAKRKIAAEYSFIAAVPIMFAATGYDMLKSYKLFTMADMPFLAVGFIVSFLSAWAAVKGFIYLLGKLTLRPFAYYRLALAPLVLFFWS.

Helical transmembrane passes span Gly-15–Phe-37, Ala-42–Trp-62, Tyr-84–Ile-104, Leu-108–Val-128, Val-143–Phe-163, Ile-182–Asp-202, Phe-217–Ile-237, and Leu-243–Trp-263.

The protein belongs to the UppP family.

It localises to the cell inner membrane. The enzyme catalyses di-trans,octa-cis-undecaprenyl diphosphate + H2O = di-trans,octa-cis-undecaprenyl phosphate + phosphate + H(+). Functionally, catalyzes the dephosphorylation of undecaprenyl diphosphate (UPP). Confers resistance to bacitracin. The sequence is that of Undecaprenyl-diphosphatase from Maridesulfovibrio salexigens (strain ATCC 14822 / DSM 2638 / NCIMB 8403 / VKM B-1763) (Desulfovibrio salexigens).